Here is a 497-residue protein sequence, read N- to C-terminus: Galactose/methyl galactoside import ATP-binding protein MglA 1 (497 aa).

ABC transporter domains follow at residues 6 to 243 (LEMR…VGRD) and 256 to 494 (GKVR…VMSM). 38–45 (GENGAGKS) provides a ligand contact to ATP.

The protein belongs to the ABC transporter superfamily. Galactose/methyl galactoside importer (TC 3.A.1.2.3) family. The complex is composed of one ATP-binding protein (MglA), two transmembrane proteins (MglC) and a solute-binding protein (MglB).

The protein localises to the cell inner membrane. The enzyme catalyses D-galactose(out) + ATP + H2O = D-galactose(in) + ADP + phosphate + H(+). It carries out the reaction methyl beta-D-galactoside(out) + ATP + H2O = methyl beta-D-galactoside(in) + ADP + phosphate + H(+). Part of the ABC transporter complex MglABC involved in galactose/methyl galactoside import. Responsible for energy coupling to the transport system. In Photobacterium profundum (strain SS9), this protein is Galactose/methyl galactoside import ATP-binding protein MglA 1.